The primary structure comprises 61 residues: Bactericidin B-5P (61 aa).

The N-terminal stretch at 1–22 (MNFSRVLFFVFACLSAFAMASA) is a signal peptide. The propeptide at 23-24 (AP) is removed by a dipeptidylpeptidase. Position 60 is a glycine amide (glycine 60).

This sequence belongs to the cecropin family.

The protein localises to the secreted. Cecropins have lytic and antibacterial activity against several Gram-positive and Gram-negative bacteria. This chain is Bactericidin B-5P, found in Manduca sexta (Tobacco hawkmoth).